The sequence spans 554 residues: Propanediol dehydratase large subunit (554 aa).

The protein belongs to the diol/glycerol dehydratase large subunit family. As to quaternary structure, the propanediol dehydratase enzyme is a heterotrimeric complex composed of a large (PduC), a medium (PduD) and a small (PduE) subunit. Requires adenosylcob(III)alamin as cofactor.

The protein localises to the bacterial microcompartment. The catalysed reaction is propane-1,2-diol = propanal + H2O. Its pathway is polyol metabolism; 1,2-propanediol degradation. Functionally, part of the PduCDE complex that catalyzes the dehydration of 1,2-propanediol (1,2-PD) to propionaldehyde. This subunit is directly targeted to the bacterial microcompartment (BMC). Expression of a cosmid containing the full 21-gene pdu operon in E.coli allows E.coli to grow on 1,2-propanediol (1,2-PD) with the appearance of BMCs in its cytoplasm. In terms of biological role, the 1,2-PD-specific bacterial microcompartment (BMC) concentrates low levels of 1,2-PD catabolic enzymes, concentrates volatile reaction intermediates thus enhancing pathway flux and keeps the level of toxic, mutagenic propionaldehyde low. This chain is Propanediol dehydratase large subunit, found in Citrobacter freundii.